Consider the following 434-residue polypeptide: Putative G3BP-like protein (434 aa).

The region spanning 18 to 134 (IGWMFVQEYY…YFVLNDIFRF (117 aa)) is the NTF2 domain. Disordered stretches follow at residues 141–180 (EEEE…EGHY) and 274–308 (VKSQ…PYTQ). S145 is subject to Phosphoserine. Over residues 148–157 (AVEKEKKDVA) the composition is skewed to basic and acidic residues. Residues 276–291 (SQASVSSTASTTGQTV) are compositionally biased toward low complexity. Over residues 296 to 308 (ADQTQQPTAPYTQ) the composition is skewed to polar residues. The 72-residue stretch at 315–386 (TSVFVKNIPP…ATLNIEERRR (72 aa)) folds into the RRM domain. A disordered region spans residues 390-434 (GKFNKSGDKKSNDNYNGMKRNFRKGNRGAFDGRSKEVTTSKKQNN). Residues 419–428 (FDGRSKEVTT) are compositionally biased toward basic and acidic residues.

Its function is as follows. Probable scaffold protein that may be involved in mRNA transport. The protein is Putative G3BP-like protein (nxt3) of Schizosaccharomyces pombe (strain 972 / ATCC 24843) (Fission yeast).